We begin with the raw amino-acid sequence, 349 residues long: Protein RecA (349 aa).

65-72 (GPESSGKT) provides a ligand contact to ATP.

Belongs to the RecA family.

Its subcellular location is the cytoplasm. Can catalyze the hydrolysis of ATP in the presence of single-stranded DNA, the ATP-dependent uptake of single-stranded DNA by duplex DNA, and the ATP-dependent hybridization of homologous single-stranded DNAs. It interacts with LexA causing its activation and leading to its autocatalytic cleavage. This is Protein RecA from Azotobacter vinelandii (strain DJ / ATCC BAA-1303).